The sequence spans 321 residues: tRNA(Ile)-lysidine synthase (321 aa).

21 to 26 (SYGSDS) is a binding site for ATP.

The protein belongs to the tRNA(Ile)-lysidine synthase family.

It localises to the cytoplasm. The enzyme catalyses cytidine(34) in tRNA(Ile2) + L-lysine + ATP = lysidine(34) in tRNA(Ile2) + AMP + diphosphate + H(+). Ligates lysine onto the cytidine present at position 34 of the AUA codon-specific tRNA(Ile) that contains the anticodon CAU, in an ATP-dependent manner. Cytidine is converted to lysidine, thus changing the amino acid specificity of the tRNA from methionine to isoleucine. The protein is tRNA(Ile)-lysidine synthase of Campylobacter jejuni (strain RM1221).